A 154-amino-acid chain; its full sequence is Transcriptional repressor NrdR (154 aa).

The segment at Met1–Asn22 is disordered. A zinc finger lies at Cys3–Cys34. Residues Leu49–Gly139 form the ATP-cone domain.

It belongs to the NrdR family. Requires Zn(2+) as cofactor.

Its function is as follows. Negatively regulates transcription of bacterial ribonucleotide reductase nrd genes and operons by binding to NrdR-boxes. The chain is Transcriptional repressor NrdR from Lactobacillus gasseri (strain ATCC 33323 / DSM 20243 / BCRC 14619 / CIP 102991 / JCM 1131 / KCTC 3163 / NCIMB 11718 / NCTC 13722 / AM63).